We begin with the raw amino-acid sequence, 207 residues long: dITP/XTP pyrophosphatase (207 aa).

10-15 contributes to the substrate binding site; it reads TRNAGK. Mg(2+) is bound by residues Glu-43 and Asp-72. The Proton acceptor role is filled by Asp-72. Substrate contacts are provided by residues Ser-73, 161-164, Lys-184, and 189-190; these read FGYD and HR.

It belongs to the HAM1 NTPase family. Homodimer. The cofactor is Mg(2+).

It carries out the reaction XTP + H2O = XMP + diphosphate + H(+). It catalyses the reaction dITP + H2O = dIMP + diphosphate + H(+). The enzyme catalyses ITP + H2O = IMP + diphosphate + H(+). In terms of biological role, pyrophosphatase that catalyzes the hydrolysis of nucleoside triphosphates to their monophosphate derivatives, with a high preference for the non-canonical purine nucleotides XTP (xanthosine triphosphate), dITP (deoxyinosine triphosphate) and ITP. Seems to function as a house-cleaning enzyme that removes non-canonical purine nucleotides from the nucleotide pool, thus preventing their incorporation into DNA/RNA and avoiding chromosomal lesions. The sequence is that of dITP/XTP pyrophosphatase from Nitratidesulfovibrio vulgaris (strain ATCC 29579 / DSM 644 / CCUG 34227 / NCIMB 8303 / VKM B-1760 / Hildenborough) (Desulfovibrio vulgaris).